Reading from the N-terminus, the 143-residue chain is Transcriptional regulator MraZ (143 aa).

2 SpoVT-AbrB domains span residues 5–47 (EYQH…PMHE) and 76–119 (ATEC…SKVI).

It belongs to the MraZ family. As to quaternary structure, forms oligomers.

The protein localises to the cytoplasm. It is found in the nucleoid. This Bacillus subtilis (strain 168) protein is Transcriptional regulator MraZ.